Reading from the N-terminus, the 596-residue chain is Protein Malvolio (596 aa).

Residues 1–34 (MSSNEAYHEPGAGGDGPGGSSGASGGGSQRSNQL) are disordered. A compositionally biased stretch (gly residues) spans 11-28 (GAGGDGPGGSSGASGGGS). Asparagine 41 carries N-linked (GlcNAc...) asparagine glycosylation. 7 helical membrane-spanning segments follow: residues 77–97 (LWAFTGPGFLMSIAYLDPGNI), 105–125 (AAAKYKILWVLLWATVLGLLM), 154–174 (WILWIMIEIAIIGSDMQEVIG), 186–206 (VVPLWGGVLITIVDTFTFLFL), 216–236 (FLFGTLITIMAVSFGYEYIVS), 263–283 (AVGVVGAVIMPHNLYLHSALV), and 309–329 (VALFVSFIINLFVVAVFAHGM). N-linked (GlcNAc...) asparagine glycosylation occurs at asparagine 359. A run of 5 helical transmembrane segments spans residues 373 to 393 (LFLGCTFGAVAMYIWGVGILA), 424 to 444 (VLVTRCIAIIPTFCLAMFSKM), 463 to 483 (PFAAIPTIAFTSCAAIMGEFV), 490 to 510 (IVSILLTIVVIGVNLYFVVVQ), and 520 to 540 (LLALVCIFAILYILFNLYLVI). N-linked (GlcNAc...) asparagine glycosylation is present at asparagine 574.

The protein belongs to the NRAMP family. Expressed in macrophages and in the nervous system.

The protein localises to the membrane. Functionally, putative transporter required for normal taste behavior. May be a nitrite/nitrate transporter. The polypeptide is Protein Malvolio (Mvl) (Drosophila melanogaster (Fruit fly)).